A 129-amino-acid chain; its full sequence is DNA base-flipping protein (129 aa).

It belongs to the MGMT family. ATL subfamily. Interacts with HelD and UvrA.

In terms of biological role, involved in DNA damage recognition. Binds DNA containing O(6)-methylguanine and larger O(6)-alkylguanine adducts, and to double-stranded DNA that contains an AP (apurinic/apyrimidinic) site. Binds to the damaged base and flips the base out of the DNA duplex into an extrahelical conformation, which allows processing by repair proteins. Works in partnership with the nucleotide excision repair (NER) pathway to enhance the repair of the O(6)-alkylguanine adducts larger than the methyl adduct. Also prevents methyl-directed mismatch repair (MMR)-mediated attack of the O(6)-alkylguanine:T mispairs for the larger alkyl groups. The polypeptide is DNA base-flipping protein (Escherichia coli (strain K12)).